A 25-amino-acid chain; its full sequence is Snake venom metalloproteinase catroxase (25 aa).

Residue E9 participates in Ca(2+) binding.

It belongs to the venom metalloproteinase (M12B) family. Monomer. It depends on Zn(2+) as a cofactor. In terms of tissue distribution, expressed by the venom gland.

Its subcellular location is the secreted. With respect to regulation, inhibited by EDTA, beta-mercaptoethanol, but not by PMSF, p-tosyl-L-phenylalanine chloromethyl ketone, p-tosyl-L-lysine chloromethyl ketone, soybean trypsin inhibitor and aprotinin. Functionally, metalloprotease that is highly active against alpha-(FGA) and beta-chains (FGB) of fibrinogen molecules. The protein is Snake venom metalloproteinase catroxase of Crotalus atrox (Western diamondback rattlesnake).